The primary structure comprises 860 residues: Leucine--tRNA ligase (860 aa).

The 'HIGH' region signature appears at 42–52 (PYPSGRLHMGH). The 'KMSKS' region motif lies at 619–623 (KMSKS). Residue K622 participates in ATP binding.

This sequence belongs to the class-I aminoacyl-tRNA synthetase family.

It is found in the cytoplasm. The catalysed reaction is tRNA(Leu) + L-leucine + ATP = L-leucyl-tRNA(Leu) + AMP + diphosphate. The protein is Leucine--tRNA ligase of Shigella boydii serotype 18 (strain CDC 3083-94 / BS512).